Here is a 424-residue protein sequence, read N- to C-terminus: Serine incorporator 5 (424 aa).

Topologically, residues 1-6 (MYALYF) are extracellular. A helical transmembrane segment spans residues 7-23 (ILVVVLCCIMMSTTVAH). Residues 24 to 52 (KMKEHIPFFEDMCKGIKAGDTCEKLVGYS) lie on the Cytoplasmic side of the membrane. Residues 53–73 (AVYRVCFGMACFFFIFCLLTL) form a helical membrane-spanning segment. The Extracellular segment spans residues 74–87 (KINNSKSCRAHIHN). Asn-76 is a glycosylation site (N-linked (GlcNAc...) asparagine). Residues 88–108 (GFWFFKLLLLGAMCSGAFFIP) traverse the membrane as a helical segment. Residues 109–119 (DQDTFLNAWRY) are Cytoplasmic-facing. A helical transmembrane segment spans residues 120 to 140 (VGAVGGFLFIGIQLLLLVEFA). The Extracellular segment spans residues 141 to 161 (HKWNKNWTAGTASNKLWYASL). N-linked (GlcNAc...) asparagine glycosylation is present at Asn-146. The helical transmembrane segment at 162–182 (ALVTLIMYSIATGGLVLMAVF) threads the bilayer. Residues 183 to 193 (YTQKDGCMENK) are Cytoplasmic-facing. Residues 194–214 (ILLGVNGGLCVLISLVAISPC) form a helical membrane-spanning segment. Residues 215–221 (VQNRQPH) lie on the Extracellular side of the membrane. The helical transmembrane segment at 222-242 (SGLLQSGVISCYVTYLTFSAL) threads the bilayer. The Cytoplasmic portion of the chain corresponds to 243–274 (SSKPAEVVLDEHGKNVTICVPDFGQDLYRDEN). The helical transmembrane segment at 275–295 (LVTILGTSLLIGCILYSCLTS) threads the bilayer. Over 296–348 (TTRSSSDALQGRYAAPELEIARCCFCFSPGGEDTEEQQQGKEGPRVIYDEKKG) the chain is Extracellular. Residues 349 to 369 (TVYIYSYFHFVFFLASLYVMM) form a helical membrane-spanning segment. Residues 370-391 (TVTNWFNYESANIESFFSGSWS) lie on the Cytoplasmic side of the membrane. Residues 392-412 (IFWVKMASCWICVLLYLCTLV) form a helical membrane-spanning segment. Over 413-424 (APLCCPTREFSV) the chain is Extracellular.

The protein belongs to the TDE1 family.

The protein resides in the cell membrane. It carries out the reaction a 1,2-diacyl-sn-glycero-3-phospho-L-serine(in) = a 1,2-diacyl-sn-glycero-3-phospho-L-serine(out). The enzyme catalyses a 1,2-diacyl-sn-glycero-3-phosphocholine(in) = a 1,2-diacyl-sn-glycero-3-phosphocholine(out). The catalysed reaction is a 1,2-diacyl-sn-glycero-3-phosphoethanolamine(in) = a 1,2-diacyl-sn-glycero-3-phosphoethanolamine(out). Its function is as follows. Restriction factor required to restrict infectivity of gammaretroviruses: acts by inhibiting an early step of viral infection. Impairs the penetration of the viral particle into the cytoplasm. Non-ATP-dependent, non-specific lipid transporter for phosphatidylserine, phosphatidylcholine, and phosphatidylethanolamine. Functions as a scramblase that flips lipids in both directions across the membrane. Phospholipid scrambling results in gammaretroviral surface exposure of phosphatidylserine and loss of membrane asymmetry, which leads to loss of infectivity. Enhances the incorporation of serine into phosphatidylserine and sphingolipids. May play a role in providing serine molecules for the formation of myelin glycosphingolipids in oligodendrocytes. This chain is Serine incorporator 5 (SERINC5), found in Macaca fascicularis (Crab-eating macaque).